We begin with the raw amino-acid sequence, 435 residues long: Elongation factor 1-alpha (435 aa).

Residues 6 to 231 (KVHINLVVIG…DALEPPKRPV (226 aa)) form the tr-type G domain. The segment at 15 to 22 (GHVDSGKS) is G1. Residue 15 to 22 (GHVDSGKS) participates in GTP binding. The interval 71–75 (GITID) is G2. The tract at residues 92–95 (DAPG) is G3. Residues 92–96 (DAPGH) and 154–157 (NKMD) each bind GTP. The tract at residues 154–157 (NKMD) is G4. A G5 region spans residues 195–197 (SGF).

It belongs to the TRAFAC class translation factor GTPase superfamily. Classic translation factor GTPase family. EF-Tu/EF-1A subfamily.

It is found in the cytoplasm. In terms of biological role, this protein promotes the GTP-dependent binding of aminoacyl-tRNA to the A-site of ribosomes during protein biosynthesis. The protein is Elongation factor 1-alpha of Tetrahymena pyriformis.